Consider the following 201-residue polypeptide: IMP cyclohydrolase (201 aa).

The protein belongs to the archaeal IMP cyclohydrolase family.

The enzyme catalyses IMP + H2O = 5-formamido-1-(5-phospho-D-ribosyl)imidazole-4-carboxamide. Its pathway is purine metabolism; IMP biosynthesis via de novo pathway; IMP from 5-formamido-1-(5-phospho-D-ribosyl)imidazole-4-carboxamide: step 1/1. Catalyzes the cyclization of 5-formylamidoimidazole-4-carboxamide ribonucleotide to IMP. This chain is IMP cyclohydrolase, found in Methanococcus maripaludis (strain C5 / ATCC BAA-1333).